The sequence spans 126 residues: Major sperm protein 3 (126 aa).

Alanine 2 carries the post-translational modification N-acetylalanine. Positions 8 to 125 (DIATMPAQKV…RRKNLPIEYN (118 aa)) constitute an MSP domain.

Sperm.

The protein resides in the cell projection. The protein localises to the pseudopodium. It localises to the cytoplasm. Its subcellular location is the cytoskeleton. Its function is as follows. Central component in molecular interactions underlying sperm crawling. Forms an extensive filament system that extends from sperm villipoda, along the leading edge of the pseudopod. The chain is Major sperm protein 3 (MSP-3) from Globodera rostochiensis (Golden nematode worm).